The following is an 87-amino-acid chain: Serine protease inhibitor Kazal-type 12 (87 aa).

The N-terminal stretch at 1-22 (MKPAGAFLLLISLACLFLSVDA) is a signal peptide. Residues 26 to 87 (GGFQAFCSNY…KLGFKHEGKC (62 aa)) form the Kazal-like domain. Intrachain disulfides connect C32–C68, C46–C65, and C54–C87.

In terms of tissue distribution, expressed in epydiymis, in the caput.

Its subcellular location is the secreted. Functionally, inhibits trypsin. This is Serine protease inhibitor Kazal-type 12 (Spink12) from Mus musculus (Mouse).